Consider the following 485-residue polypeptide: Glutamyl-tRNA(Gln) amidotransferase subunit A (485 aa).

Catalysis depends on charge relay system residues Lys-79 and Ser-154. Ser-178 (acyl-ester intermediate) is an active-site residue.

The protein belongs to the amidase family. GatA subfamily. In terms of assembly, heterotrimer of A, B and C subunits.

It catalyses the reaction L-glutamyl-tRNA(Gln) + L-glutamine + ATP + H2O = L-glutaminyl-tRNA(Gln) + L-glutamate + ADP + phosphate + H(+). Allows the formation of correctly charged Gln-tRNA(Gln) through the transamidation of misacylated Glu-tRNA(Gln) in organisms which lack glutaminyl-tRNA synthetase. The reaction takes place in the presence of glutamine and ATP through an activated gamma-phospho-Glu-tRNA(Gln). The protein is Glutamyl-tRNA(Gln) amidotransferase subunit A of Desulforamulus reducens (strain ATCC BAA-1160 / DSM 100696 / MI-1) (Desulfotomaculum reducens).